The following is a 236-amino-acid chain: Cutinase (236 aa).

The first 20 residues, 1–20 (MSLTLFSFLSLVSILCIVTA), serve as a signal peptide directing secretion. Residues Cys-66 and Cys-143 are joined by a disulfide bond. The active-site Nucleophile is Ser-154. Cys-202 and Cys-209 are joined by a disulfide. Asp-206 is an active-site residue. His-218 functions as the Proton donor/acceptor in the catalytic mechanism.

The protein belongs to the cutinase family. The 2 disulfide bonds play a critical role in holding the catalytic residues in juxta-position; reduction of the disulfide bridges results in the complete inactivation of the enzyme.

It localises to the secreted. It carries out the reaction cutin + H2O = cutin monomers.. Functionally, catalyzes the hydrolysis of complex carboxylic polyesters found in the cell wall of plants. Degrades cutin, a macromolecule that forms the structure of the plant cuticle. Allows pathogenic fungi to penetrate through the cuticular barrier into the host plant during the initial stage of fungal infection. The sequence is that of Cutinase (CUT1) from Blumeria hordei (Barley powdery mildew).